Reading from the N-terminus, the 378-residue chain is Quinolinate synthase (378 aa).

Positions 59 and 80 each coordinate iminosuccinate. Cys-125 is a binding site for [4Fe-4S] cluster. Iminosuccinate is bound by residues 151-153 (YAN) and Ser-168. [4Fe-4S] cluster is bound at residue Cys-212. Residues 238–240 (HPE) and Thr-255 each bind iminosuccinate. Residue Cys-309 coordinates [4Fe-4S] cluster.

It belongs to the quinolinate synthase family. Type 1 subfamily. Requires [4Fe-4S] cluster as cofactor.

The protein localises to the cytoplasm. It carries out the reaction iminosuccinate + dihydroxyacetone phosphate = quinolinate + phosphate + 2 H2O + H(+). Its pathway is cofactor biosynthesis; NAD(+) biosynthesis; quinolinate from iminoaspartate: step 1/1. In terms of biological role, catalyzes the condensation of iminoaspartate with dihydroxyacetone phosphate to form quinolinate. The sequence is that of Quinolinate synthase from Burkholderia pseudomallei (strain 1106a).